The primary structure comprises 338 residues: 4-hydroxy-2-oxovalerate aldolase (338 aa).

The Pyruvate carboxyltransferase domain occupies isoleucine 6–methionine 256. Arginine 14–aspartate 15 is a substrate binding site. Aspartate 15 is a binding site for Mn(2+). Histidine 18 (proton acceptor) is an active-site residue. 2 residues coordinate substrate: serine 168 and histidine 195. 2 residues coordinate Mn(2+): histidine 195 and histidine 197. Residue tyrosine 286 participates in substrate binding.

It belongs to the 4-hydroxy-2-oxovalerate aldolase family.

It carries out the reaction (S)-4-hydroxy-2-oxopentanoate = acetaldehyde + pyruvate. In Moorella thermoacetica (strain ATCC 39073 / JCM 9320), this protein is 4-hydroxy-2-oxovalerate aldolase.